Here is a 40-residue protein sequence, read N- to C-terminus: Photosystem II reaction center protein J (40 aa).

A helical membrane pass occupies residues 8 to 28 (IPLWLIGTVAGILVLGLLGIF).

The protein belongs to the PsbJ family. In terms of assembly, PSII is composed of 1 copy each of membrane proteins PsbA, PsbB, PsbC, PsbD, PsbE, PsbF, PsbH, PsbI, PsbJ, PsbK, PsbL, PsbM, PsbT, PsbX, PsbY, PsbZ, Psb30/Ycf12, at least 3 peripheral proteins of the oxygen-evolving complex and a large number of cofactors. It forms dimeric complexes.

It localises to the plastid. It is found in the chloroplast thylakoid membrane. In terms of biological role, one of the components of the core complex of photosystem II (PSII). PSII is a light-driven water:plastoquinone oxidoreductase that uses light energy to abstract electrons from H(2)O, generating O(2) and a proton gradient subsequently used for ATP formation. It consists of a core antenna complex that captures photons, and an electron transfer chain that converts photonic excitation into a charge separation. In Physcomitrium patens (Spreading-leaved earth moss), this protein is Photosystem II reaction center protein J.